Consider the following 437-residue polypeptide: Aminopeptidase G (437 aa).

Active-site residues include Cys70, His361, and Asn382.

It belongs to the peptidase C1 family.

The protein localises to the cytoplasm. The protein is Aminopeptidase G (pepG) of Lactobacillus delbrueckii subsp. lactis.